The following is a 247-amino-acid chain: Probable transcriptional regulatory protein DvMF_3201 (247 aa).

The disordered stretch occupies residues 1–21 (MAGHSKWANIQHRKGRQDAKR).

This sequence belongs to the TACO1 family.

It localises to the cytoplasm. The chain is Probable transcriptional regulatory protein DvMF_3201 from Nitratidesulfovibrio vulgaris (strain DSM 19637 / Miyazaki F) (Desulfovibrio vulgaris).